Consider the following 314-residue polypeptide: Methylglutaconyl-CoA hydratase, mitochondrial (314 aa).

A mitochondrion-targeting transit peptide spans 1–42 (MAAAAPGALGALRTGRVRLVAACCARLGPAAWARGTAPRRGY). The residue at position 75 (Lys75) is an N6-acetyllysine; alternate. Lys75 carries the post-translational modification N6-succinyllysine; alternate. The tract at residues 80–94 (KNLLKMLSKAVDALK) is RNA-binding. The residue at position 84 (Lys84) is an N6-succinyllysine. N6-acetyllysine; alternate is present on residues Lys88 and Lys119. 2 positions are modified to N6-succinyllysine; alternate: Lys88 and Lys119. Lys123 and Lys135 each carry N6-succinyllysine. Residues Lys179 and Lys186 each carry the N6-acetyllysine; alternate modification. Residues Lys179 and Lys186 each carry the N6-succinyllysine; alternate modification. The residue at position 304 (Lys304) is an N6-succinyllysine.

This sequence belongs to the enoyl-CoA hydratase/isomerase family. In terms of assembly, homohexamer. In terms of tissue distribution, detected in heart, brain, liver, spleen, skeletal muscle and kidney. Expressed in brain, kidney, liver and spleen tissue (at protein level).

Its subcellular location is the mitochondrion. It catalyses the reaction (3S)-3-hydroxy-3-methylglutaryl-CoA = 3-methyl-(2E)-glutaconyl-CoA + H2O. The catalysed reaction is (3S)-citramalyl-CoA = itaconyl-CoA + H2O. The enzyme catalyses 3-hydroxyisovaleryl-CoA = 3-methylbut-2-enoyl-CoA + H2O. It carries out the reaction (S)-3-hydroxyglutaryl-CoA = (2E)-glutaconyl-CoA + H2O. The protein operates within amino-acid degradation; L-leucine degradation; (S)-3-hydroxy-3-methylglutaryl-CoA from 3-isovaleryl-CoA: step 3/3. Catalyzes the fifth step in the leucine degradation pathway, the reversible hydration of 3-methylglutaconyl-CoA (3-MG-CoA) to 3-hydroxy-3-methylglutaryl-CoA (HMG-CoA). Can catalyze the reverse reaction but at a much lower rate in vitro. HMG-CoA is then quickly degraded by another enzyme (such as HMG-CoA lyase) to give acetyl-CoA and acetoacetate. Uses other substrates such as (2E)-glutaconyl-CoA efficiently in vitro, and to a lesser extent 3-methylcrotonyl-CoA (3-methyl-(2E)-butenoyl-CoA), crotonyl-CoA ((2E)-butenoyl-CoA) and 3-hydroxybutanoyl-CoA (the missing carboxylate reduces affinity to the active site). Originally it was identified as an RNA-binding protein as it binds to AU-rich elements (AREs) in vitro. AREs direct rapid RNA degradation and mRNA deadenylation. Might have itaconyl-CoA hydratase activity, converting itaconyl-CoA into citramalyl-CoA in the C5-dicarboxylate catabolism pathway. The C5-dicarboxylate catabolism pathway is required to detoxify itaconate, an antimicrobial metabolite and immunomodulator produced by macrophages during certain infections, that can act as a vitamin B12-poisoning metabolite. The chain is Methylglutaconyl-CoA hydratase, mitochondrial (Auh) from Mus musculus (Mouse).